The chain runs to 839 residues: LPS-assembly protein LptD (839 aa).

A signal peptide spans 1-21; that stretch reads MAIGITACVLSLINYQGLAYS.

This sequence belongs to the LptD family. Component of the lipopolysaccharide transport and assembly complex. Interacts with LptE and LptA.

The protein resides in the cell outer membrane. Together with LptE, is involved in the assembly of lipopolysaccharide (LPS) at the surface of the outer membrane. This Legionella pneumophila (strain Paris) protein is LPS-assembly protein LptD.